A 564-amino-acid chain; its full sequence is Pyruvate decarboxylase (564 aa).

Residues Asp-28 and His-115 each coordinate pyruvate. Residues Thr-390 and 413 to 415 (GSI) each bind thiamine diphosphate. Asp-444 is a binding site for Mg(2+). Thiamine diphosphate contacts are provided by residues 445 to 446 (GS) and 471 to 476 (NDGYTI). 2 residues coordinate Mg(2+): Asn-471 and Gly-473. Glu-477 provides a ligand contact to pyruvate.

This sequence belongs to the TPP enzyme family. Homotetramer. The cofactor is Mg(2+). It depends on thiamine diphosphate as a cofactor.

The enzyme catalyses a 2-oxocarboxylate + H(+) = an aldehyde + CO2. It catalyses the reaction pyruvate + H(+) = acetaldehyde + CO2. The polypeptide is Pyruvate decarboxylase (PDC1) (Candida glabrata (strain ATCC 2001 / BCRC 20586 / JCM 3761 / NBRC 0622 / NRRL Y-65 / CBS 138) (Yeast)).